The following is a 292-amino-acid chain: Coiled-coil domain-containing protein 137 (292 aa).

Low complexity predominate over residues 1 to 16 (MAGLRRGAAAVAPAGT). 4 disordered regions span residues 1–94 (MAGL…AQAA), 139–183 (FLSK…EKAA), 205–243 (PELT…LTTS), and 263–292 (ALKR…EMQL). Basic and acidic residues-rich tracts occupy residues 57–78 (KNQD…RQEM), 155–164 (PKKEKSERKK), and 173–183 (KARQRREEKAA). Residues 156–194 (KKEKSERKKAFQKRRLDKARQRREEKAAERLEQELLQDT) are a coiled coil. Residues 222-232 (KKSLMLKKLLS) are compositionally biased toward low complexity. S232 is subject to Phosphoserine. The span at 234-243 (GSVSQPLTTS) shows a compositional bias: polar residues. The stretch at 247-276 (QRIVAEERERAVNAYRALKRLQQQRQETQS) forms a coiled coil.

It localises to the chromosome. The chain is Coiled-coil domain-containing protein 137 (CCDC137) from Bos taurus (Bovine).